Here is a 495-residue protein sequence, read N- to C-terminus: Cytochrome P450 monooxygenase 88 (495 aa).

Residues 2–22 (FLQIVTSVLATGLLYALISVL) traverse the membrane as a helical segment. 2 N-linked (GlcNAc...) asparagine glycosylation sites follow: Asn-25 and Asn-198. Cys-428 is a heme binding site.

Belongs to the cytochrome P450 family. Heme is required as a cofactor.

It is found in the membrane. The protein operates within secondary metabolite biosynthesis. In terms of biological role, cytochrome P450 monooxygenase that is able to use 4-ethoxybenzoic acid as a substrate for oxidation. The protein is Cytochrome P450 monooxygenase 88 of Postia placenta (strain ATCC 44394 / Madison 698-R) (Brown rot fungus).